Reading from the N-terminus, the 171-residue chain is MIIYRDCISQDEMFSDIYKITEVANGLCLEVEGKMVSRKEGEIDEALIGGNASADGPEDCTEATVITGVDIVMNHHLQETSFTKESYKKYIKDYMKSIKARLEESKPERVKPFMTGAAEQVKHILGNFKNYQFFVGENMNPDGMVGLLDFREDGVTPYMIFFKDGLEMEKC.

The TCTP domain occupies 1-171 (MIIYRDCISQ…FKDGLEMEKC (171 aa)).

This sequence belongs to the TCTP family. Expressed by the venom gland.

Its subcellular location is the secreted. In terms of biological role, venom protein that causes edema, enhances vascular permeability and is likely related to the inflammatory activity of the venom. The protein is Translationally-controlled tumor protein homolog of Micrurus fulvius (Eastern coral snake).